We begin with the raw amino-acid sequence, 532 residues long: uncharacterized protein (532 aa).

The next 14 helical transmembrane spans lie at 25–45, 65–85, 109–129, 134–154, 179–199, 203–223, 248–268, 302–322, 344–364, 371–391, 392–412, 425–445, 459–479, and 494–514; these read ITKILSAVYRVPFQNIVGDVG, SGFPVIISKLMNDYSEKNHHT, AVPIALFMGDSHLAVLIQVAA, LFPFVALLRGGFQGRHEMLPS, KGASLYTAGAAAASGSLAGSL, IILGFFWFKTKRDNQTDRQNE, LLLFIQLVDALNLYALLSGGE, VPYISMAVKNKELKIMKEKIT, KPVNIMLFQNGEGTGALQVFS, SLAVTAAAVLQGAGYTVFPAI, AVGAGVAVKWVLNTLLVPRYG, AAVAGLNLYQLRQKEWLDKLR, SAVLLAYTRLWTFLFPATGRG, and AVFIYCMMRLGIFTDEELNSV.

It belongs to the polysaccharide synthase family.

The protein localises to the cell membrane. This is an uncharacterized protein from Bacillus subtilis (strain 168).